The sequence spans 91 residues: Small ribosomal subunit protein uS15 (91 aa).

The protein belongs to the universal ribosomal protein uS15 family. As to quaternary structure, part of the 30S ribosomal subunit. Forms a bridge to the 50S subunit in the 70S ribosome, contacting the 23S rRNA.

In terms of biological role, one of the primary rRNA binding proteins, it binds directly to 16S rRNA where it helps nucleate assembly of the platform of the 30S subunit by binding and bridging several RNA helices of the 16S rRNA. Functionally, forms an intersubunit bridge (bridge B4) with the 23S rRNA of the 50S subunit in the ribosome. The protein is Small ribosomal subunit protein uS15 of Nautilia profundicola (strain ATCC BAA-1463 / DSM 18972 / AmH).